Here is a 4008-residue protein sequence, read N- to C-terminus: Extracellular matrix organizing protein FRAS1 (4008 aa).

A signal peptide spans 1 to 26 (MGVLKVWLGLALALAEFAVLPHHSEG). VWFC domains lie at 27–88 (ACVY…PECV), 93–153 (GSCH…PVCV), 157–217 (KPCS…PQCS), 219–279 (RSCS…EECV), and 283–343 (GSCS…PECI). Topologically, residues 27–3901 (ACVYQDSLLA…AASLSQTGAS (3875 aa)) are extracellular. A Phosphoserine modification is found at Ser-344. The 71-residue stretch at 347 to 417 (GYCVYEETGE…VKGQCCPDCT (71 aa)) folds into the VWFC 6 domain. The N-linked (GlcNAc...) asparagine glycan is linked to Asn-361. FU repeat units lie at residues 409 to 460 (KGQC…GFYQ), 462 to 505 (GSLC…GFYQ), 507 to 553 (RHSC…GFYN), 555 to 599 (QGTC…GYYA), 602 to 647 (TGRC…GFYS), 649 to 705 (HGVC…HFYL), 708 to 753 (TGIC…GYFH), 755 to 800 (EGSC…EQFL), 803 to 852 (VGYC…GYYA), 854 to 900 (RGAC…GHYL), 903 to 948 (NHVC…QYYL), 952 to 997 (TNTC…SFYQ), 999 to 1042 (SGLC…GYFA), and 1046 to 1089 (KHKC…GFSV). N-linked (GlcNAc...) asparagine glycosylation occurs at Asn-728. N-linked (GlcNAc...) asparagine glycans are attached at residues Asn-1093 and Asn-1108. CSPG repeat units follow at residues 1102–1197 (TPSL…LKIS), 1217–1308 (APYV…LQAN), 1329–1438 (GLQL…FEVS), 1463–1559 (APKV…FSFA), 1595–1689 (PVFQ…ISVT), 1710–1810 (GPRL…FSVS), and 1833–1936 (PPVI…FYVS). Residue Asn-1504 is glycosylated (N-linked (GlcNAc...) asparagine). Asn-1777 carries N-linked (GlcNAc...) asparagine glycosylation. Asn-1948 and Asn-1978 each carry an N-linked (GlcNAc...) asparagine glycan. CSPG repeat units follow at residues 1957–2057 (EPPR…FSLT), 2078–2177 (TPHL…FDVV), 2199–2291 (PPVI…FTLS), 2311–2404 (SLPV…FTVS), and 2439–2536 (TPRI…FLVK). Calx-beta domains lie at 2543–2646 (VSDN…VELS), 2659–2770 (AKVI…IALA), 2784–2890 (AKVL…VFLS), 2905–3007 (IAIN…VYLG), and 3025–3129 (ATIT…LVLG). N-linked (GlcNAc...) asparagine glycans are attached at residues Asn-2563, Asn-2664, and Asn-2682. Residues Asn-2908, Asn-2985, Asn-3070, Asn-3218, Asn-3676, and Asn-3875 are each glycosylated (N-linked (GlcNAc...) asparagine). Residues 3902–3922 (IGSALAAIMLLLLVFLVACFI) form a helical membrane-spanning segment. Topologically, residues 3923 to 4008 (NRKCQKQRKK…HNNLQDGTEV (86 aa)) are cytoplasmic.

This sequence belongs to the FRAS1 family. As to expression, expressed in many adult tissues, with highest levels in kidney, pancreas and thalamus. Relatively high expression was also detected in fetal kidney and heart.

It is found in the cell membrane. Its function is as follows. Involved in extracellular matrix organization. Required for the regulation of epidermal-basement membrane adhesion responsible for proper organogenesis during embryonic development. Involved in brain organization and function. In Homo sapiens (Human), this protein is Extracellular matrix organizing protein FRAS1.